The chain runs to 481 residues: Small ribosomal subunit protein bS1 (481 aa).

S1 motif domains lie at 36–105 (GDIV…LSKK), 123–188 (DEAV…LSRR), 209–277 (GTIR…LSLK), and 294–363 (GQIV…LSLK). The segment at 429–467 (TAQMEKFAAAEAAGRGADDQSSASSAPSEKTAGGSLASD) is disordered. Positions 437–456 (AAEAAGRGADDQSSASSAPS) are enriched in low complexity.

It belongs to the bacterial ribosomal protein bS1 family.

Functionally, binds mRNA; thus facilitating recognition of the initiation point. It is needed to translate mRNA with a short Shine-Dalgarno (SD) purine-rich sequence. This Mycobacterium tuberculosis (strain CDC 1551 / Oshkosh) protein is Small ribosomal subunit protein bS1 (rpsA).